A 194-amino-acid polypeptide reads, in one-letter code: Small ribosomal subunit protein uS4c (194 aa).

The region spanning 84-144 (MRLDTLLYRT…KEILKSLNDK (61 aa)) is the S4 RNA-binding domain.

This sequence belongs to the universal ribosomal protein uS4 family. As to quaternary structure, part of the 30S ribosomal subunit. Contacts protein S5. The interaction surface between S4 and S5 is involved in control of translational fidelity.

Its subcellular location is the plastid. The protein resides in the chloroplast. Functionally, one of the primary rRNA binding proteins, it binds directly to 16S rRNA where it nucleates assembly of the body of the 30S subunit. Its function is as follows. With S5 and S12 plays an important role in translational accuracy. This is Small ribosomal subunit protein uS4c (rps4) from Bigelowiella natans (Pedinomonas minutissima).